The primary structure comprises 171 residues: Transcription factor pcr1 (171 aa).

The bZIP domain occupies 10–73 (DEKRRRILER…FRLKSQLLAH (64 aa)). Positions 12–51 (KRRRILERNRIAASKFRQKKKEWIKELEQTANAAFEQSKR) are basic motif. Positions 52 to 66 (LQLLLSQLQQEAFRL) are leucine-zipper. The interval 125–171 (QMHPSLQGLPPNQHPQMPPSSQQPNSDDVQQHMFSAAGLPRSLGGPI) is disordered. The span at 143-152 (PSSQQPNSDD) shows a compositional bias: low complexity.

It belongs to the bZIP family. In terms of assembly, heterodimer of pcr1/mts2 and atf1/mts1.

The protein resides in the nucleus. Functionally, involved in regulation of gene expression for sexual development. Binds and activates CRE sites (cAMP-response elements, also known as M26 meiotic recombination hotspots). This Schizosaccharomyces pombe (strain 972 / ATCC 24843) (Fission yeast) protein is Transcription factor pcr1 (pcr1).